The primary structure comprises 265 residues: Hydroxyethylthiazole kinase 1 (265 aa).

M39 lines the substrate pocket. ATP contacts are provided by K115 and T168. Residue G195 participates in substrate binding.

It belongs to the Thz kinase family. It depends on Mg(2+) as a cofactor.

The enzyme catalyses 5-(2-hydroxyethyl)-4-methylthiazole + ATP = 4-methyl-5-(2-phosphooxyethyl)-thiazole + ADP + H(+). The protein operates within cofactor biosynthesis; thiamine diphosphate biosynthesis; 4-methyl-5-(2-phosphoethyl)-thiazole from 5-(2-hydroxyethyl)-4-methylthiazole: step 1/1. Functionally, catalyzes the phosphorylation of the hydroxyl group of 4-methyl-5-beta-hydroxyethylthiazole (THZ). This chain is Hydroxyethylthiazole kinase 1, found in Clostridium botulinum (strain Loch Maree / Type A3).